The sequence spans 201 residues: CDP-diacylglycerol--serine O-phosphatidyltransferase (201 aa).

The next 6 membrane-spanning stretches (helical) occupy residues Ile-19–Ile-39, Phe-57–Leu-77, Leu-88–Leu-108, Gly-112–Ile-132, Asn-133–Ile-153, and Ile-162–Ala-182.

The protein belongs to the CDP-alcohol phosphatidyltransferase class-I family.

The protein resides in the cell membrane. The catalysed reaction is a CDP-1,2-diacyl-sn-glycerol + L-serine = a 1,2-diacyl-sn-glycero-3-phospho-L-serine + CMP + H(+). The sequence is that of CDP-diacylglycerol--serine O-phosphatidyltransferase (pssA) from Methanocaldococcus jannaschii (strain ATCC 43067 / DSM 2661 / JAL-1 / JCM 10045 / NBRC 100440) (Methanococcus jannaschii).